The following is a 290-amino-acid chain: Acetyl-coenzyme A carboxylase carboxyl transferase subunit beta (290 aa).

The region spanning 27 to 290 (LWHKCPSCEA…FTHSPSPVSA (264 aa)) is the CoA carboxyltransferase N-terminal domain. Zn(2+) contacts are provided by C31, C34, C50, and C53. A C4-type zinc finger spans residues 31 to 53 (CPSCEAVLYRPELEKTLDVCPKC).

The protein belongs to the AccD/PCCB family. Acetyl-CoA carboxylase is a heterohexamer composed of biotin carboxyl carrier protein (AccB), biotin carboxylase (AccC) and two subunits each of ACCase subunit alpha (AccA) and ACCase subunit beta (AccD). It depends on Zn(2+) as a cofactor.

It is found in the cytoplasm. The catalysed reaction is N(6)-carboxybiotinyl-L-lysyl-[protein] + acetyl-CoA = N(6)-biotinyl-L-lysyl-[protein] + malonyl-CoA. Its pathway is lipid metabolism; malonyl-CoA biosynthesis; malonyl-CoA from acetyl-CoA: step 1/1. Functionally, component of the acetyl coenzyme A carboxylase (ACC) complex. Biotin carboxylase (BC) catalyzes the carboxylation of biotin on its carrier protein (BCCP) and then the CO(2) group is transferred by the transcarboxylase to acetyl-CoA to form malonyl-CoA. This Pseudomonas aeruginosa (strain UCBPP-PA14) protein is Acetyl-coenzyme A carboxylase carboxyl transferase subunit beta.